We begin with the raw amino-acid sequence, 512 residues long: Maturase K (512 aa).

The protein belongs to the intron maturase 2 family. MatK subfamily.

The protein localises to the plastid. It localises to the chloroplast. In terms of biological role, usually encoded in the trnK tRNA gene intron. Probably assists in splicing its own and other chloroplast group II introns. In Lemna aequinoctialis (Lesser duckweed), this protein is Maturase K.